The following is a 698-amino-acid chain: Elongation factor G (698 aa).

In terms of domain architecture, tr-type G spans 10-285 (DKTRNIGIMA…AVVDYLPSPL (276 aa)). GTP is bound by residues 19 to 26 (AHIDAGKT), 83 to 87 (DTPGH), and 137 to 140 (NKMD).

This sequence belongs to the TRAFAC class translation factor GTPase superfamily. Classic translation factor GTPase family. EF-G/EF-2 subfamily.

It localises to the cytoplasm. Catalyzes the GTP-dependent ribosomal translocation step during translation elongation. During this step, the ribosome changes from the pre-translocational (PRE) to the post-translocational (POST) state as the newly formed A-site-bound peptidyl-tRNA and P-site-bound deacylated tRNA move to the P and E sites, respectively. Catalyzes the coordinated movement of the two tRNA molecules, the mRNA and conformational changes in the ribosome. This is Elongation factor G from Lactiplantibacillus plantarum (strain ATCC BAA-793 / NCIMB 8826 / WCFS1) (Lactobacillus plantarum).